The sequence spans 73 residues: Putative defensin-like protein 33 (73 aa).

A signal peptide spans 1–25 (MASNKVSFIFILFLCVLSTAEFGEA). 3 disulfides stabilise this stretch: cysteine 33-cysteine 59, cysteine 45-cysteine 68, and cysteine 49-cysteine 70.

This sequence belongs to the DEFL family.

The protein localises to the secreted. The sequence is that of Putative defensin-like protein 33 from Arabidopsis thaliana (Mouse-ear cress).